Here is a 247-residue protein sequence, read N- to C-terminus: uncharacterized protein (247 aa).

Residues 11 to 85 form the HTH merR-type domain; it reads GMSIGAVLDL…LKVIRAQLDA (75 aa). Positions 14–38 form a DNA-binding region, H-T-H motif; sequence IGAVLDLLRPDFPDVTISKIRFLEA.

Homodimer.

Transcriptional regulator that binds to its own promoter and thus may play a role in the regulation of the cotranscribed genes Rv1827 and Rv1828. Can also bind several promoter regions of genes that are essential, including ftsZ. Binds to the imperfect everted repeat sequence CTCAA through its winged-HTH motif. This is an uncharacterized protein from Mycobacterium tuberculosis (strain ATCC 25618 / H37Rv).